A 929-amino-acid chain; its full sequence is ATP-dependent RNA helicase DDX42 (929 aa).

Lysine 5 is subject to N6-acetyllysine. The residue at position 12 (arginine 12) is an Omega-N-methylarginine. Disordered stretches follow at residues 25-119 and 182-203; these read KKEE…LEAF and EYDS…LPPI. The segment covering 35–52 has biased composition (low complexity); that stretch reads SHSAFGAASSSSGFGKSA. At serine 58 the chain carries Phosphoserine. Residues 70–84 are compositionally biased toward acidic residues; that stretch reads DEENAYFEDEEEDSS. Phosphoserine is present on residues serine 96, serine 104, serine 109, and serine 111. Positions 116–157 form a coiled coil; the sequence is LEAFMAEVEDQAARDMKRLEEKDKERKNVKGIRDDIEEEDDQ. Serine 185 carries the post-translational modification Phosphoserine. Residues 253 to 281 carry the Q motif motif; sequence SSFAHFGFDEQLMHQIRKSEYTQPTPIQC. The Helicase ATP-binding domain maps to 284-459; that stretch reads VPVALSGRDM…RDILIDPIRV (176 aa). 297–304 lines the ATP pocket; sequence AKTGSGKT. The short motif at 407–410 is the DEAD box element; the sequence is DEAD. A Helicase C-terminal domain is found at 487 to 632; that stretch reads WLTRRLVEFT…HVSKELLDLA (146 aa). 2 disordered regions span residues 662–682 and 723–929; these read ERPG…VMSN and GTSS…RWDS. The span at 723-737 shows a compositional bias: low complexity; sequence GTSSAGASGWTSAGS. Composition is skewed to polar residues over residues 738 to 777 and 787 to 798; these read LNSV…SSAP and GVNNTASGNNSR. A necessary for interaction with TP53BP2 region spans residues 739–828; sequence NSVPTNSAQQ…RHSHGDGGNR (90 aa). Basic and acidic residues predominate over residues 821 to 911; that stretch reads SHGDGGNRHG…KVDSKTDKTP (91 aa). Lysine 894 is covalently cross-linked (Glycyl lysine isopeptide (Lys-Gly) (interchain with G-Cter in SUMO2)).

This sequence belongs to the DEAD box helicase family. DDX42 subfamily. Transient component of the SF3B subcomplex of the 17S U2 SnRNP complex. Interacts (via the C-terminus) with TP53BP2; the interaction is not inhibitied by TP53BP2 ubiquitination and is independent of p53/TP53.

Its subcellular location is the cytoplasm. The protein resides in the nucleus. It catalyses the reaction ATP + H2O = ADP + phosphate + H(+). Its function is as follows. ATP-dependent RNA helicase that binds to partially double-stranded RNAs (dsRNAs) in order to unwind RNA secondary structures. Unwinding is promoted in the presence of single-strand binding proteins. Also mediates RNA duplex formation thereby displacing the single-strand RNA binding protein. ATP and ADP modulate its activity: ATP binding and hydrolysis by DDX42 triggers RNA strand separation, whereas the ADP-bound form of the protein triggers annealing of complementary RNA strands. Required for assembly of the 17S U2 SnRNP complex of the spliceosome, a large ribonucleoprotein complex that removes introns from transcribed pre-mRNAs: DDX42 associates transiently with the SF3B subcomplex of the 17S U2 SnRNP complex and is released after fulfilling its role in the assembly of 17S U2 SnRNP. Involved in the survival of cells by interacting with TP53BP2 and thereby counteracting the apoptosis-stimulating activity of TP53BP2. Relocalizes TP53BP2 to the cytoplasm. The protein is ATP-dependent RNA helicase DDX42 (Ddx42) of Mus musculus (Mouse).